A 219-amino-acid polypeptide reads, in one-letter code: 2-hydroxy-3-keto-5-methylthiopentenyl-1-phosphate phosphatase (219 aa).

Belongs to the HAD-like hydrolase superfamily. MtnX family.

The enzyme catalyses 2-hydroxy-5-methylsulfanyl-3-oxopent-1-enyl phosphate + H2O = 1,2-dihydroxy-5-(methylsulfanyl)pent-1-en-3-one + phosphate. Its pathway is amino-acid biosynthesis; L-methionine biosynthesis via salvage pathway; L-methionine from S-methyl-5-thio-alpha-D-ribose 1-phosphate: step 4/6. Functionally, dephosphorylates 2-hydroxy-3-keto-5-methylthiopentenyl-1-phosphate (HK-MTPenyl-1-P) yielding 1,2-dihydroxy-3-keto-5-methylthiopentene (DHK-MTPene). This is 2-hydroxy-3-keto-5-methylthiopentenyl-1-phosphate phosphatase from Bacillus anthracis (strain A0248).